The following is a 1023-amino-acid chain: Sodium/potassium-transporting ATPase subunit alpha-1 (1023 aa).

Residues M1–V5 constitute a propeptide that is removed on maturation. Positions M1–E11 are enriched in basic and acidic residues. Residues M1–V39 form a disordered region. Over G6–P87 the chain is Cytoplasmic. The residue at position 9 (K9) is an N6-acetyllysine. Y10 carries the phosphotyrosine modification. S16 carries the post-translational modification Phosphoserine. K21 carries the N6-acetyllysine modification. The span at K28–V39 shows a compositional bias: basic and acidic residues. Phosphoserine occurs at positions 40 and 47. Residues P82–P84 are phosphoinositide-3 kinase binding. Residues E88 to A108 form a helical membrane-spanning segment. Topologically, residues I109–Y131 are extracellular. The helical transmembrane segment at L132 to A152 threads the bilayer. Residues K153 to I288 lie on the Cytoplasmic side of the membrane. The interval S216–N235 is disordered. S228 carries the phosphoserine modification. At Y260 the chain carries Phosphotyrosine. A helical transmembrane segment spans residues E289–I308. At L309–A320 the chain is on the extracellular side. Residues V321–A338 traverse the membrane as a helical segment. The Cytoplasmic portion of the chain corresponds to T339–L772. The 4-aspartylphosphate intermediate role is filled by D376. Residues S452 and S484 each carry the phosphoserine modification. Residue K487 coordinates ATP. Phosphotyrosine is present on Y542. Residues R596–D717 form a mediates interaction with SCN7A region. At K661 the chain carries N6-succinyllysine. Phosphoserine is present on residues S668 and S675. 2 residues coordinate Mg(2+): D717 and D721. A helical transmembrane segment spans residues K773 to I792. Over F793 to L802 the chain is Extracellular. A helical transmembrane segment spans residues G803 to A823. Residues Y824 to K843 lie on the Cytoplasmic side of the membrane. Residues L844–F866 traverse the membrane as a helical segment. Residues F867–C918 lie on the Extracellular side of the membrane. The chain crosses the membrane as a helical span at residues H919–K938. At T939–N951 the chain is on the cytoplasmic side. Position 943 is a phosphoserine; by PKA (S943). A helical membrane pass occupies residues K952–Y970. Residues C971–P985 are Extracellular-facing. The chain crosses the membrane as a helical span at residues T986–K1006. At L1007 to Y1023 the chain is on the cytoplasmic side.

The protein belongs to the cation transport ATPase (P-type) (TC 3.A.3) family. Type IIC subfamily. The sodium/potassium-transporting ATPase is composed of a catalytic alpha subunit, an auxiliary non-catalytic beta subunit and an additional regulatory subunit. Interacts with regulatory subunit FXYD1. Interacts with regulatory subunit FXYD3. Interacts with SIK1. Binds the HLA class II histocompatibility antigen DR1. Interacts with SLC35G1 and STIM1. Interacts with CLN3; this interaction regulates the sodium/potassium-transporting ATPase complex localization at the plasma membrane. Interacts with SCN7A; activates ATP1A1 P-type sodium:potassium-exchanging transporter activity which indirectly signals to nearby neurons to regulate sodium homeostasis. In terms of processing, phosphorylation on Tyr-10 modulates pumping activity. Phosphorylation of Ser-943 by PKA modulates the response of ATP1A1 to PKC. Dephosphorylation by protein phosphatase 2A (PP2A) following increases in intracellular sodium, leading to increase catalytic activity.

It is found in the cell membrane. The protein localises to the basolateral cell membrane. It localises to the sarcolemma. Its subcellular location is the cell projection. The protein resides in the axon. It is found in the melanosome. It catalyses the reaction K(+)(out) + Na(+)(in) + ATP + H2O = K(+)(in) + Na(+)(out) + ADP + phosphate + H(+). Its function is as follows. This is the catalytic component of the active enzyme, which catalyzes the hydrolysis of ATP coupled with the exchange of sodium and potassium ions across the plasma membrane. This action creates the electrochemical gradient of sodium and potassium ions, providing the energy for active transport of various nutrients. Could also be part of an osmosensory signaling pathway that senses body-fluid sodium levels and controls salt intake behavior as well as voluntary water intake to regulate sodium homeostasis. The chain is Sodium/potassium-transporting ATPase subunit alpha-1 (ATP1A1) from Homo sapiens (Human).